Consider the following 1045-residue polypeptide: MDAEVEDKTLHTLSKGTEVPMDSLIPELRVPYDCSMAKKRRAEEQASGVPINKRKSLLMKPRHYSPDMGCKESPDNRNEDDGLLETNDHATADEIMVKSMDETLHLPAQDSSLQKKDQYTCYPELMVKSLVHLGKFEESESVQTTCENLNGSSIQSLKAESDEAHEGSMVHSDNGRDKVHHSQPPFCSSGDSESDSDSAENGWGNGSNSSEDTDTHKGPKHKLTYNRKDLLEVPEIKAEDDKFIPCENRCDSDTDGRDPQNSHMEPLVVKAQPSFPEVEEGESLATVTEEPAEVEKAKGNLSLLEQAIALQAERGSVFHHTYKELDRFFLDHLARERRQPRVTDANGRQIFTNKHSPRPERREAKCPIPGCDGTGHVTGLYPHHRSLSGCPHKVRVPLEILAMHENVLKCPTPGCTGRGHVNSNRNTHRSLSGCPIAAAEKLAMTQDKSQLDSSQTGQCPEQAHRVNLVKQIEFNFRSHAITSPRASASKEQEKFGKVPFDYASFDAQVFGKRPLLQTGQGQKAPPFPESKHFSNPVKFPNGLPSAGAHTQSTVRASSYGHGQYSEDTHIAAAAAILNLSTRCREATDILSNKPQSLRAKGAEIEVDENGTLDLSMKKNRIHDKSIPPTSSPTTITTPSSSPFNASSLLVNAAFYQALSDQEGWNVPINYSKSHGKTEEEKEKDPVNFLENLEEKKFAGEASIPSPKPKLHTRDLKKELITCPTPGCDGSGHVTGNYASHRSVSGCPLADKTLKSLMAANSQELKCPTPGCDGSGHVTGNYASHRSLSGCPRARKGGIKMTPTKEEKEDSELRCPVIGCDGQGHISGKYTSHRTASGCPLAAKRQKENPLNGAPLSWKLNKQELPHCPLPGCNGLGHVNNVFVTHRSLSGCPLNAQAIKKVKVSEELMTIKLKATGGIDGDEEIRHLDEEIKELNESNLKIEADMMKLQTQITSMESNLKTIEEENKLIEQSNESLLKELAGLSQALISSLADIQLPQMGPINEQNFEAYVNTLTDMYSNLEQDYSPECKALLESIKQAVKGIHV.

Disordered stretches follow at residues 38–90 (KKRR…NDHA), 158–228 (KAES…YNRK), and 340–364 (PRVTDANGRQIFTNKHSPRPERREA). Positions 52–63 (NKRKSLLMKPRH) are enriched in basic residues. 2 stretches are compositionally biased toward basic and acidic residues: residues 69 to 90 (GCKESPDNRNEDDGLLETNDHA) and 159 to 177 (AESDEAHEGSMVHSDNGRD). 6 CCHHC-type zinc fingers span residues 357 to 400 (PRPE…PLEI), 401 to 444 (LAMH…KLAM), 713 to 756 (RDLK…LKSL), 757 to 800 (MAAN…GIKM), 805 to 848 (EEKE…QKEN), and 858 to 901 (KLNK…IKKV). Residues C366, C371, H384, C390, C410, C415, H428, C434, C722, C727, H740, C746, C766, C771, H784, C790, C814, C819, H832, C838, C867, C872, H885, and C891 each coordinate Zn(2+). Residues 918-987 (IDGDEEIRHL…KELAGLSQAL (70 aa)) adopt a coiled-coil conformation.

This sequence belongs to the MYT1 family.

The protein resides in the nucleus. In terms of biological role, repressor that binds to DNA sequences containing a bipartite element consisting of a direct repeat of the sequence 5'-AAAGTTT-3' separated by 2-9 nucleotides. Represses basal transcription activity from target promoters. The protein is Suppression of tumorigenicity 18 protein (St18) of Mus musculus (Mouse).